A 297-amino-acid polypeptide reads, in one-letter code: 4-hydroxy-tetrahydrodipicolinate synthase (297 aa).

Residue T47 coordinates pyruvate. Y135 functions as the Proton donor/acceptor in the catalytic mechanism. The active-site Schiff-base intermediate with substrate is K163. A pyruvate-binding site is contributed by I205.

The protein belongs to the DapA family. As to quaternary structure, homotetramer; dimer of dimers.

The protein localises to the cytoplasm. It carries out the reaction L-aspartate 4-semialdehyde + pyruvate = (2S,4S)-4-hydroxy-2,3,4,5-tetrahydrodipicolinate + H2O + H(+). The protein operates within amino-acid biosynthesis; L-lysine biosynthesis via DAP pathway; (S)-tetrahydrodipicolinate from L-aspartate: step 3/4. In terms of biological role, catalyzes the condensation of (S)-aspartate-beta-semialdehyde [(S)-ASA] and pyruvate to 4-hydroxy-tetrahydrodipicolinate (HTPA). This Dehalococcoides mccartyi (strain ATCC BAA-2266 / KCTC 15142 / 195) (Dehalococcoides ethenogenes (strain 195)) protein is 4-hydroxy-tetrahydrodipicolinate synthase.